We begin with the raw amino-acid sequence, 239 residues long: Pyridoxine 5'-phosphate synthase (239 aa).

Asn7 contacts 3-amino-2-oxopropyl phosphate. 9-10 (DH) is a binding site for 1-deoxy-D-xylulose 5-phosphate. Arg18 lines the 3-amino-2-oxopropyl phosphate pocket. His43 (proton acceptor) is an active-site residue. Residues Arg45 and His50 each contribute to the 1-deoxy-D-xylulose 5-phosphate site. The active-site Proton acceptor is the Glu70. Residue Thr100 coordinates 1-deoxy-D-xylulose 5-phosphate. The Proton donor role is filled by His191. Residues Gly192 and 213–214 (GH) each bind 3-amino-2-oxopropyl phosphate.

Belongs to the PNP synthase family. Homooctamer; tetramer of dimers.

The protein localises to the cytoplasm. The enzyme catalyses 3-amino-2-oxopropyl phosphate + 1-deoxy-D-xylulose 5-phosphate = pyridoxine 5'-phosphate + phosphate + 2 H2O + H(+). It functions in the pathway cofactor biosynthesis; pyridoxine 5'-phosphate biosynthesis; pyridoxine 5'-phosphate from D-erythrose 4-phosphate: step 5/5. Its function is as follows. Catalyzes the complicated ring closure reaction between the two acyclic compounds 1-deoxy-D-xylulose-5-phosphate (DXP) and 3-amino-2-oxopropyl phosphate (1-amino-acetone-3-phosphate or AAP) to form pyridoxine 5'-phosphate (PNP) and inorganic phosphate. This Geobacter sulfurreducens (strain ATCC 51573 / DSM 12127 / PCA) protein is Pyridoxine 5'-phosphate synthase.